We begin with the raw amino-acid sequence, 655 residues long: p-hydroxybenzoic acid efflux pump subunit AaeB (655 aa).

The next 11 helical transmembrane spans lie at F13–L33, W38–P58, L69–I89, L93–V113, W121–L141, E152–I172, L370–V390, F407–P427, Q431–V451, M459–F479, and F482–L502.

It belongs to the aromatic acid exporter ArAE (TC 2.A.85) family.

It localises to the cell inner membrane. Functionally, forms an efflux pump with AaeA. Could function as a metabolic relief valve, allowing to eliminate certain compounds when they accumulate to high levels in the cell. The chain is p-hydroxybenzoic acid efflux pump subunit AaeB from Salmonella heidelberg (strain SL476).